Consider the following 419-residue polypeptide: Double-stranded RNA-binding protein 1 (419 aa).

2 DRBM domains span residues 15 to 84 (VFKS…ELAK) and 101 to 170 (LCKN…AIQS). The short motif at 207–222 (KARKAQFKKKAQKGKR) is the Bipartite nuclear localization element. 6 tandem repeats follow at residues 247–274 (EKIE…SVET), 275–302 (EKIE…SVET), 303–330 (EKIE…SVET), 331–358 (EKIE…SVET), 359–386 (EKIE…SVET), and 387–414 (EKIE…SVET). The segment at 247–414 (EKIETTPNLE…KEAAFGSVET (168 aa)) is 6 X 28 AA repeats of E-K-I-E-T-T-P-N-L-E-[PS]-[PS]-S-C-M-[NS]-G-L-K-E-A-A-F-G-S-V-E-T.

As to quaternary structure, homodimer. Heterodimer with DRB2, DRB4 or DRB5. Interacts with SE and DCL1. Interacts with RCF3, RS40 and RS41. In terms of tissue distribution, expressed in rosette and cauline leaves, stems, roots, flowers and siliques.

It localises to the nucleus. The protein resides in the nucleus speckle. Its function is as follows. Double-stranded RNA-binding protein involved in RNA-mediated post-transcriptional gene silencing (PTGS). Functions in the microRNAs (miRNAs) biogenesis by assisting DICER-LIKE 1 (DCL1) in the accurate processing from primary miRNAs (pri-miRNAs) to miRNAs in the nucleus. Forms a complex with SERRATE (SE) and DCL1 to promote accurate processing of pri-miRNAs by DCL1. Binds and assist DCL1 for accurate processing of precursor miRNAs (pre-miRNA). Indirectly involved in the production of trans-acting small interfering RNAs (ta-siRNAs) derived from the TAS1, TAS2 or TAS3 endogenous transcripts by participating in the production of their initiating miRNAs. Involved with argonaute 1 (AGO1) in the guide strand selection from miRNA duplexes, presumably by directional loading of the miRNA duplex (guide stand and passenger strand) onto the RNA-induced silencing complex (RISC) for passenger strand degradation. Does not participate in sense transgene-induced post-transcriptional gene silencing (S-PTGS). Involved in several plant development aspects and response to hormones through its role in miRNAs processing. The protein is Double-stranded RNA-binding protein 1 (DRB1) of Arabidopsis thaliana (Mouse-ear cress).